The chain runs to 398 residues: uncharacterized protein (398 aa).

One can recognise a Radical SAM core domain in the interval 21 to 253; that stretch reads TNFGPTNLII…WQLTSTSEPE (233 aa). [4Fe-4S] cluster contacts are provided by Cys-37, Cys-41, and Cys-44.

The protein belongs to the radical SAM superfamily. Anaerobic sulfatase-maturating enzyme family. The cofactor is [4Fe-4S] cluster.

This is an uncharacterized protein from Synechocystis sp. (strain ATCC 27184 / PCC 6803 / Kazusa).